A 207-amino-acid polypeptide reads, in one-letter code: Thiamine-phosphate synthase (207 aa).

Residues 35-39 (QYRDK) and Asn-67 contribute to the 4-amino-2-methyl-5-(diphosphooxymethyl)pyrimidine site. Mg(2+) contacts are provided by Asp-68 and Asp-86. Residue Thr-105 participates in 4-amino-2-methyl-5-(diphosphooxymethyl)pyrimidine binding. 132-134 (SVT) is a binding site for 2-[(2R,5Z)-2-carboxy-4-methylthiazol-5(2H)-ylidene]ethyl phosphate. Lys-135 provides a ligand contact to 4-amino-2-methyl-5-(diphosphooxymethyl)pyrimidine. Gly-162 contacts 2-[(2R,5Z)-2-carboxy-4-methylthiazol-5(2H)-ylidene]ethyl phosphate.

It belongs to the thiamine-phosphate synthase family. The cofactor is Mg(2+).

The enzyme catalyses 2-[(2R,5Z)-2-carboxy-4-methylthiazol-5(2H)-ylidene]ethyl phosphate + 4-amino-2-methyl-5-(diphosphooxymethyl)pyrimidine + 2 H(+) = thiamine phosphate + CO2 + diphosphate. It carries out the reaction 2-(2-carboxy-4-methylthiazol-5-yl)ethyl phosphate + 4-amino-2-methyl-5-(diphosphooxymethyl)pyrimidine + 2 H(+) = thiamine phosphate + CO2 + diphosphate. The catalysed reaction is 4-methyl-5-(2-phosphooxyethyl)-thiazole + 4-amino-2-methyl-5-(diphosphooxymethyl)pyrimidine + H(+) = thiamine phosphate + diphosphate. Its pathway is cofactor biosynthesis; thiamine diphosphate biosynthesis; thiamine phosphate from 4-amino-2-methyl-5-diphosphomethylpyrimidine and 4-methyl-5-(2-phosphoethyl)-thiazole: step 1/1. Its function is as follows. Condenses 4-methyl-5-(beta-hydroxyethyl)thiazole monophosphate (THZ-P) and 2-methyl-4-amino-5-hydroxymethyl pyrimidine pyrophosphate (HMP-PP) to form thiamine monophosphate (TMP). This chain is Thiamine-phosphate synthase, found in Pseudomonas putida (strain ATCC 700007 / DSM 6899 / JCM 31910 / BCRC 17059 / LMG 24140 / F1).